The chain runs to 291 residues: Elongation factor Ts (291 aa).

The involved in Mg(2+) ion dislocation from EF-Tu stretch occupies residues 81–84 (TDFV). The segment at 271–291 (EGKEKKDESFADEVMAQVRDS) is disordered.

It belongs to the EF-Ts family.

The protein resides in the cytoplasm. Its function is as follows. Associates with the EF-Tu.GDP complex and induces the exchange of GDP to GTP. It remains bound to the aminoacyl-tRNA.EF-Tu.GTP complex up to the GTP hydrolysis stage on the ribosome. The chain is Elongation factor Ts from Halorhodospira halophila (strain DSM 244 / SL1) (Ectothiorhodospira halophila (strain DSM 244 / SL1)).